Consider the following 141-residue polypeptide: Large ribosomal subunit protein uL11 (141 aa).

Belongs to the universal ribosomal protein uL11 family. In terms of assembly, part of the ribosomal stalk of the 50S ribosomal subunit. Interacts with L10 and the large rRNA to form the base of the stalk. L10 forms an elongated spine to which L12 dimers bind in a sequential fashion forming a multimeric L10(L12)X complex. Post-translationally, one or more lysine residues are methylated.

Its function is as follows. Forms part of the ribosomal stalk which helps the ribosome interact with GTP-bound translation factors. This is Large ribosomal subunit protein uL11 from Chlorobium phaeovibrioides (strain DSM 265 / 1930) (Prosthecochloris vibrioformis (strain DSM 265)).